The primary structure comprises 159 residues: Putative UPF0479 protein YDR545C-A (159 aa).

2 helical membrane passes run Ile38–Gln58 and Val135–His155.

This sequence belongs to the UPF0479 family.

It is found in the membrane. In Saccharomyces cerevisiae (strain ATCC 204508 / S288c) (Baker's yeast), this protein is Putative UPF0479 protein YDR545C-A.